A 177-amino-acid chain; its full sequence is Putative fimbrin-like protein FimI (177 aa).

The signal sequence occupies residues 1–19; it reads MIRKGAALVGLVLMSPVIA. Cys-40 and Cys-81 are oxidised to a cystine.

It belongs to the fimbrial protein family.

Its subcellular location is the fimbrium. This Salmonella typhi protein is Putative fimbrin-like protein FimI (fimI).